A 467-amino-acid chain; its full sequence is ATP-dependent protease ATPase subunit HslU (467 aa).

Residues Val22 and 64–69 (GVGKTE) each bind ATP. A disordered region spans residues 146 to 185 (KASNNSNPLESLLGGAIPNFGNNDDEEEETPTEEIKTKRS). The span at 168–177 (NDDEEEETPT) shows a compositional bias: acidic residues. Asp280, Glu345, and Arg417 together coordinate ATP.

Belongs to the ClpX chaperone family. HslU subfamily. In terms of assembly, a double ring-shaped homohexamer of HslV is capped on each side by a ring-shaped HslU homohexamer. The assembly of the HslU/HslV complex is dependent on binding of ATP.

The protein resides in the cytoplasm. Its function is as follows. ATPase subunit of a proteasome-like degradation complex; this subunit has chaperone activity. The binding of ATP and its subsequent hydrolysis by HslU are essential for unfolding of protein substrates subsequently hydrolyzed by HslV. HslU recognizes the N-terminal part of its protein substrates and unfolds these before they are guided to HslV for hydrolysis. The sequence is that of ATP-dependent protease ATPase subunit HslU from Staphylococcus haemolyticus (strain JCSC1435).